The primary structure comprises 548 residues: Lysine--tRNA ligase (548 aa).

The short motif at 52–60 is the 'HIGH' region element; the sequence is PSGLPHIGT. Residues 300 to 304 carry the 'KMSKS' region motif; it reads KISKS. Lys303 lines the ATP pocket.

It belongs to the class-I aminoacyl-tRNA synthetase family.

The protein localises to the cytoplasm. It catalyses the reaction tRNA(Lys) + L-lysine + ATP = L-lysyl-tRNA(Lys) + AMP + diphosphate. The polypeptide is Lysine--tRNA ligase (Mesorhizobium japonicum (strain LMG 29417 / CECT 9101 / MAFF 303099) (Mesorhizobium loti (strain MAFF 303099))).